Here is a 138-residue protein sequence, read N- to C-terminus: ATP synthase epsilon chain (138 aa).

Belongs to the ATPase epsilon chain family. In terms of assembly, F-type ATPases have 2 components, CF(1) - the catalytic core - and CF(0) - the membrane proton channel. CF(1) has five subunits: alpha(3), beta(3), gamma(1), delta(1), epsilon(1). CF(0) has three main subunits: a, b and c.

Its subcellular location is the cell membrane. Produces ATP from ADP in the presence of a proton gradient across the membrane. The chain is ATP synthase epsilon chain from Streptococcus equi subsp. equi (strain 4047).